Here is a 166-residue protein sequence, read N- to C-terminus: Putative transmembrane protein ORF166 (166 aa).

Transmembrane regions (helical) follow at residues 35 to 55, 60 to 80, and 124 to 144; these read IILV…FAGL, PICV…FVTA, and IFCL…AFIN.

The protein resides in the host membrane. The protein is Putative transmembrane protein ORF166 of Acidianus convivator (ABV).